The primary structure comprises 432 residues: Glyceraldehyde-3-phosphate dehydrogenase, testis-specific (432 aa).

Residues 1-97 (MSRRDVVLTN…PPPPPPPKPA (97 aa)) form a testis-specific N-terminal extension region. Residues 40–101 (PPPPKVEEPP…PPPKPAKELT (62 aa)) are disordered. The segment covering 44 to 55 (KVEEPPPPKEEP) has biased composition (basic and acidic residues). Pro residues-rich tracts occupy residues 56 to 67 (PPPPPPPPPPQI) and 75 to 95 (APPP…PPPK). NAD(+) is bound by residues 109–110 (RI), Asp-130, Lys-175, Tyr-197, and Thr-217. Residues 247–249 (SCT), Thr-278, 307–308 (TG), and Arg-330 contribute to the D-glyceraldehyde 3-phosphate site. Residue Cys-248 is the Nucleophile of the active site. The residue at position 350 (Ser-350) is a Phosphoserine. Asn-412 contacts NAD(+).

This sequence belongs to the glyceraldehyde-3-phosphate dehydrogenase family. As to quaternary structure, homotetramer. In terms of tissue distribution, expressed in both head and flagellum of epididymal sperm.

It localises to the cytoplasm. It carries out the reaction D-glyceraldehyde 3-phosphate + phosphate + NAD(+) = (2R)-3-phospho-glyceroyl phosphate + NADH + H(+). It functions in the pathway carbohydrate degradation; glycolysis; pyruvate from D-glyceraldehyde 3-phosphate: step 1/5. Functionally, may play an important role in regulating the switch between different pathways for energy production during spermiogenesis and in the spermatozoon. Required for sperm motility and male fertility. This is Glyceraldehyde-3-phosphate dehydrogenase, testis-specific (Gapdhs) from Rattus norvegicus (Rat).